The following is a 122-amino-acid chain: MARIAGVNIPTNKRVNIALQYIHGIGPKFAREIVTKVGIADDRRVNQLSDAEVLQIREAIDADYQVEGDLRREVSMNIKRLMDLGCYRGLRHRRSLPVRGQRTHTNARTRKGPAKAIAGKKK.

A disordered region spans residues 97 to 122 (PVRGQRTHTNARTRKGPAKAIAGKKK).

It belongs to the universal ribosomal protein uS13 family. As to quaternary structure, part of the 30S ribosomal subunit. Forms a loose heterodimer with protein S19. Forms two bridges to the 50S subunit in the 70S ribosome.

In terms of biological role, located at the top of the head of the 30S subunit, it contacts several helices of the 16S rRNA. In the 70S ribosome it contacts the 23S rRNA (bridge B1a) and protein L5 of the 50S subunit (bridge B1b), connecting the 2 subunits; these bridges are implicated in subunit movement. Contacts the tRNAs in the A and P-sites. This Brucella abortus (strain S19) protein is Small ribosomal subunit protein uS13.